The following is a 303-amino-acid chain: Ornithine carbamoyltransferase (303 aa).

Residues 52–55 (STRT), Q79, R103, and 130–133 (HPCQ) each bind carbamoyl phosphate. Residues N161, D222, and 226-227 (SM) contribute to the L-ornithine site. Carbamoyl phosphate is bound by residues 262–263 (CL) and R290.

Belongs to the aspartate/ornithine carbamoyltransferase superfamily. OTCase family.

It localises to the cytoplasm. It carries out the reaction carbamoyl phosphate + L-ornithine = L-citrulline + phosphate + H(+). The protein operates within amino-acid biosynthesis; L-arginine biosynthesis; L-arginine from L-ornithine and carbamoyl phosphate: step 1/3. Reversibly catalyzes the transfer of the carbamoyl group from carbamoyl phosphate (CP) to the N(epsilon) atom of ornithine (ORN) to produce L-citrulline. This chain is Ornithine carbamoyltransferase, found in Geobacter metallireducens (strain ATCC 53774 / DSM 7210 / GS-15).